Here is a 520-residue protein sequence, read N- to C-terminus: Probable bifunctional tRNA threonylcarbamoyladenosine biosynthesis protein (520 aa).

Positions 1–318 (MKIGPVLGIE…YRADQVLVTW (318 aa)) are kae1. Histidine 105, histidine 109, and tyrosine 126 together coordinate Fe cation. L-threonylcarbamoyladenylate is bound by residues 126-130 (YASGA), aspartate 158, glycine 171, glutamate 175, and asparagine 251. Aspartate 279 is a binding site for Fe cation. Residues 327–520 (RHPDAYSARG…HEIELRGRYL (194 aa)) enclose the Protein kinase domain. Residues 333 to 341 (SARGAEAIV) and lysine 350 each bind ATP. Aspartate 437 functions as the Proton acceptor; for kinase activity in the catalytic mechanism.

In the N-terminal section; belongs to the KAE1 / TsaD family. This sequence in the C-terminal section; belongs to the protein kinase superfamily. Tyr protein kinase family. BUD32 subfamily. As to quaternary structure, component of the KEOPS complex that consists of Kae1, Bud32, Cgi121 and Pcc1; the whole complex dimerizes. The cofactor is Fe(2+).

Its subcellular location is the cytoplasm. The catalysed reaction is L-seryl-[protein] + ATP = O-phospho-L-seryl-[protein] + ADP + H(+). It catalyses the reaction L-threonyl-[protein] + ATP = O-phospho-L-threonyl-[protein] + ADP + H(+). The enzyme catalyses L-threonylcarbamoyladenylate + adenosine(37) in tRNA = N(6)-L-threonylcarbamoyladenosine(37) in tRNA + AMP + H(+). In terms of biological role, required for the formation of a threonylcarbamoyl group on adenosine at position 37 (t(6)A37) in tRNAs that read codons beginning with adenine. Is a component of the KEOPS complex that is probably involved in the transfer of the threonylcarbamoyl moiety of threonylcarbamoyl-AMP (TC-AMP) to the N6 group of A37. The Kae1 domain likely plays a direct catalytic role in this reaction. The Bud32 domain probably displays kinase activity that regulates Kae1 function. The chain is Probable bifunctional tRNA threonylcarbamoyladenosine biosynthesis protein from Methanospirillum hungatei JF-1 (strain ATCC 27890 / DSM 864 / NBRC 100397 / JF-1).